Here is a 196-residue protein sequence, read N- to C-terminus: Nucleoid occlusion factor SlmA (196 aa).

The HTH tetR-type domain occupies 7–68; that stretch reads TNRREEILQA…GLIEFIEDSI (62 aa). A DNA-binding region (H-T-H motif) is located at residues 31–50; the sequence is TTAKLAAQVGVSEAALYRHF. Residues 115 to 142 are a coiled coil; that stretch reads EQDRLQSRINQLFERIETQLRQVLRERK.

It belongs to the nucleoid occlusion factor SlmA family. In terms of assembly, homodimer. Interacts with FtsZ.

It localises to the cytoplasm. Its subcellular location is the nucleoid. Required for nucleoid occlusion (NO) phenomenon, which prevents Z-ring formation and cell division over the nucleoid. Acts as a DNA-associated cell division inhibitor that binds simultaneously chromosomal DNA and FtsZ, and disrupts the assembly of FtsZ polymers. SlmA-DNA-binding sequences (SBS) are dispersed on non-Ter regions of the chromosome, preventing FtsZ polymerization at these regions. The chain is Nucleoid occlusion factor SlmA from Photobacterium profundum (strain SS9).